Consider the following 105-residue polypeptide: Neuropeptide-like protein 32 (105 aa).

A signal peptide spans 1–22; that stretch reads MRQFNLLLVFCLIALTALPVFS. A propeptide spanning residues 23 to 54 is cleaved from the precursor; sequence FPNGLTMDSIDMEPMGAFDENGAADESPRVKR. Gly59 bears the Glycine amide mark. Residue Trp64 is modified to Tryptophan amide. Gly68, Gly73, and Gly80 each carry glycine amide. Trp86 is subject to Tryptophan amide. A glycine amide mark is found at Gly91 and Gly98. Position 103 is a tryptophan amide (Trp103).

It belongs to the YARP (YGGW-amide related peptide) family.

It localises to the secreted. In terms of biological role, may have antimicrobial activity. The protein is Neuropeptide-like protein 32 (nlp-32) of Caenorhabditis elegans.